Here is a 59-residue protein sequence, read N- to C-terminus: Large ribosomal subunit protein uL30 (59 aa).

Belongs to the universal ribosomal protein uL30 family. As to quaternary structure, part of the 50S ribosomal subunit.

The polypeptide is Large ribosomal subunit protein uL30 (Psychrobacter cryohalolentis (strain ATCC BAA-1226 / DSM 17306 / VKM B-2378 / K5)).